Consider the following 47-residue polypeptide: Rhodotorucin-A peptides type 3 (47 aa).

Residues 1 to 3 (MVA) constitute a propeptide that is removed on maturation. The S-farnesyl cysteine moiety is linked to residue cysteine 14. Positions 15–18 (TVAK) are excised as a propeptide. The S-farnesyl cysteine moiety is linked to residue cysteine 29. Residues 30–33 (TVSK) constitute a propeptide that is removed on maturation. Cysteine 44 is lipidated: S-farnesyl cysteine. Residues 45–47 (TVA) constitute a propeptide that is removed on maturation.

It localises to the cell membrane. Its function is as follows. Rhodotorucin-A is a mating pheromone in cells of mating type A of Rhodosporidium toruloides. The sequence is that of Rhodotorucin-A peptides type 3 (RHA3) from Rhodotorula toruloides (Yeast).